The following is a 479-amino-acid chain: Glycogen synthase (479 aa).

Lysine 15 is a binding site for ADP-alpha-D-glucose.

This sequence belongs to the glycosyltransferase 1 family. Bacterial/plant glycogen synthase subfamily.

The enzyme catalyses [(1-&gt;4)-alpha-D-glucosyl](n) + ADP-alpha-D-glucose = [(1-&gt;4)-alpha-D-glucosyl](n+1) + ADP + H(+). It participates in glycan biosynthesis; glycogen biosynthesis. Its function is as follows. Synthesizes alpha-1,4-glucan chains using ADP-glucose. This is Glycogen synthase from Roseobacter denitrificans (strain ATCC 33942 / OCh 114) (Erythrobacter sp. (strain OCh 114)).